Consider the following 290-residue polypeptide: GTPase Era (290 aa).

Residues lysine 2 to glutamate 169 form the Era-type G domain. Positions glycine 10–serine 17 are G1. Glycine 10–serine 17 contributes to the GTP binding site. Residues glutamine 36 to asparagine 40 form a G2 region. Positions aspartate 57–glycine 60 are G3. GTP is bound by residues aspartate 57–phenylalanine 61 and asparagine 119–aspartate 122. The G4 stretch occupies residues asparagine 119–aspartate 122. The G5 stretch occupies residues isoleucine 148 to alanine 150. The KH type-2 domain occupies leucine 200–lysine 276.

Belongs to the TRAFAC class TrmE-Era-EngA-EngB-Septin-like GTPase superfamily. Era GTPase family. Monomer.

The protein resides in the cytoplasm. Its subcellular location is the cell inner membrane. Its function is as follows. An essential GTPase that binds both GDP and GTP, with rapid nucleotide exchange. Plays a role in 16S rRNA processing and 30S ribosomal subunit biogenesis and possibly also in cell cycle regulation and energy metabolism. The sequence is that of GTPase Era from Borrelia garinii subsp. bavariensis (strain ATCC BAA-2496 / DSM 23469 / PBi) (Borreliella bavariensis).